Consider the following 89-residue polypeptide: Putative acyl-CoA-binding protein (89 aa).

Positions 3–88 constitute an ACB domain; the sequence is VEEQFKTSAE…VKELVEKNGL (86 aa). An acyl-CoA-binding positions include K15, 30–34, K52, K56, and Y75; that span reads YSLYK.

Belongs to the ACBP family.

In terms of biological role, binds medium- and long-chain acyl-CoA esters with very high affinity and may function as an intracellular carrier of acyl-CoA esters. The chain is Putative acyl-CoA-binding protein from Hypsibius exemplaris (Freshwater tardigrade).